The chain runs to 1204 residues: E3 ubiquitin-protein ligase DZIP3 (1204 aa).

Disordered regions lie at residues 1–22 (MDSL…QTKE) and 640–681 (SIPS…EQVS). Positions 649-658 (SVKDLQEVKS) are enriched in basic and acidic residues. The span at 659–668 (KTKKKKRTKS) shows a compositional bias: basic residues. 2 coiled-coil regions span residues 746–861 (KETE…TSRA) and 906–941 (QLKA…KVKQ). Residues 1088-1098 (PKKSESEEKSA) are compositionally biased toward basic and acidic residues. The segment at 1088 to 1141 (PKKSESEEKSAQDGNNASPSHTASQPNAPQDPKSAQGSATWEGDKDMDNEEEEE) is disordered. A compositionally biased stretch (polar residues) spans 1099–1126 (QDGNNASPSHTASQPNAPQDPKSAQGSA). The span at 1132–1141 (KDMDNEEEEE) shows a compositional bias: acidic residues. The RING-type; atypical zinc-finger motif lies at 1144–1184 (CVICHENLSPENLSVLPCAHKFHSQCIRPWLMQQGTCPTCR).

In terms of assembly, probably interacts with DAZL.

The protein resides in the cytoplasm. It carries out the reaction S-ubiquitinyl-[E2 ubiquitin-conjugating enzyme]-L-cysteine + [acceptor protein]-L-lysine = [E2 ubiquitin-conjugating enzyme]-L-cysteine + N(6)-ubiquitinyl-[acceptor protein]-L-lysine.. The protein operates within protein modification; protein ubiquitination. E3 Ubiquitin ligase proteins mediate ubiquitination and subsequent proteasomal degradation of target proteins. E3 ubiquitin ligases accept ubiquitin from an E2 ubiquitin-conjugating enzyme in the form of a thioester and then directly transfers the ubiquitin to targeted substrates. Able to specifically bind RNA. The sequence is that of E3 ubiquitin-protein ligase DZIP3 (Dzip3) from Mus musculus (Mouse).